The chain runs to 349 residues: MELDLEPTLKPLIEQDTLKWIFVGGKGGVGKTTTSSSIAVQLALQHPESEFLLISTDPAHNLSDAFCQKFGKEARKVEGLSNLSCMEIDPEAAMSDLQQQAQQYNNDPNDPLKSIMSDMTGSIPGIDEALSFMEVLKHIKNQKVNENDSKDKISYRTIIFDTAPTGHTLRFLQLPSTLQKLLGKFQQLSGKLGPMMSMLGGGAGGQQDMFEKLNEVQKNVAEVNEQFTDPELTTFVCVCISEFLSLYETERMIQELMSYKMDVNSIVVNQLLFADDDENPCLRCVSRWKMQKKYLDQMAELYEDYHLVKMPLLGTEIRGVENLKKFSKFLMVPYDPKKDRGLITEMKEQ.

Lysine 26–threonine 33 provides a ligand contact to ATP. Aspartate 57 is a catalytic residue. Residues glutamate 242 and asparagine 269 each coordinate ATP. Cysteine 281 and cysteine 284 together coordinate Zn(2+).

The protein belongs to the arsA ATPase family. Homodimer. Component of the Golgi to ER traffic (GET) complex, which is composed of GET1, GET2 and GET3. Within the complex, GET1 and GET2 form a heterotetramer which is stabilized by phosphatidylinositol binding and which binds to the GET3 homodimer. Interacts with the chloride channel protein GEF1.

The protein localises to the cytoplasm. The protein resides in the endoplasmic reticulum. Its subcellular location is the golgi apparatus. Functionally, ATPase required for the post-translational delivery of tail-anchored (TA) proteins to the endoplasmic reticulum. Recognizes and selectively binds the transmembrane domain of TA proteins in the cytosol. This complex then targets to the endoplasmic reticulum by membrane-bound receptors GET1 and GET2, where the tail-anchored protein is released for insertion. This process is regulated by ATP binding and hydrolysis. ATP binding drives the homodimer towards the closed dimer state, facilitating recognition of newly synthesized TA membrane proteins. ATP hydrolysis is required for insertion. Subsequently, the homodimer reverts towards the open dimer state, lowering its affinity for the GET1-GET2 receptor, and returning it to the cytosol to initiate a new round of targeting. Cooperates with the HDEL receptor ERD2 to mediate the ATP-dependent retrieval of resident ER proteins that contain a C-terminal H-D-E-L retention signal from the Golgi to the ER. Involved in low-level resistance to the oxyanions arsenite and arsenate, and in heat tolerance. This Lodderomyces elongisporus (strain ATCC 11503 / CBS 2605 / JCM 1781 / NBRC 1676 / NRRL YB-4239) (Yeast) protein is ATPase GET3.